We begin with the raw amino-acid sequence, 412 residues long: Transcription termination factor 3, mitochondrial (412 aa).

A mitochondrion-targeting transit peptide spans 1–67 (MALLAQQLPR…IKTYRTLFWN (67 aa)).

It belongs to the mTERF family.

It is found in the mitochondrion. Binds promoter DNA and regulates initiation of transcription. Required for normal mitochondrial transcription and translation, and for normal assembly of mitochondrial respiratory complexes. Required for normal mitochondrial function. Maintains 16S rRNA levels and functions in mitochondrial ribosome assembly by regulating the biogenesis of the 39S ribosomal subunit. In Mus musculus (Mouse), this protein is Transcription termination factor 3, mitochondrial (Mterf3).